We begin with the raw amino-acid sequence, 271 residues long: Putative hydro-lyase blr2921 (271 aa).

The protein belongs to the D-glutamate cyclase family.

This is Putative hydro-lyase blr2921 from Bradyrhizobium diazoefficiens (strain JCM 10833 / BCRC 13528 / IAM 13628 / NBRC 14792 / USDA 110).